The following is a 107-amino-acid chain: Multidrug resistance protein mmr (107 aa).

The next 4 helical transmembrane spans lie at 2 to 19 (TYLF…ATSL), 29 to 51 (LWPT…VSIS), 58 to 80 (VAYA…LFLG), and 84 to 106 (SVTK…LTGA).

It belongs to the drug/metabolite transporter (DMT) superfamily. Small multidrug resistance (SMR) (TC 2.A.7.1) family. Mmr subfamily.

The protein localises to the cell membrane. Its function is as follows. Multidrug efflux pump. Confers resistance to tetraphenylphosphonium (TPP), erythromycin, ethidium bromide, acriflavine, safranin O and pyronin Y. This chain is Multidrug resistance protein mmr (mmr), found in Mycolicibacterium paratuberculosis (strain ATCC BAA-968 / K-10) (Mycobacterium paratuberculosis).